Here is a 498-residue protein sequence, read N- to C-terminus: Probable cytosol aminopeptidase (498 aa).

Mn(2+) is bound by residues Lys269 and Asp274. Lys281 is a catalytic residue. Mn(2+) contacts are provided by Asp292, Asp351, and Glu353. The active site involves Arg355.

This sequence belongs to the peptidase M17 family. Requires Mn(2+) as cofactor.

It localises to the cytoplasm. The enzyme catalyses Release of an N-terminal amino acid, Xaa-|-Yaa-, in which Xaa is preferably Leu, but may be other amino acids including Pro although not Arg or Lys, and Yaa may be Pro. Amino acid amides and methyl esters are also readily hydrolyzed, but rates on arylamides are exceedingly low.. It catalyses the reaction Release of an N-terminal amino acid, preferentially leucine, but not glutamic or aspartic acids.. In terms of biological role, presumably involved in the processing and regular turnover of intracellular proteins. Catalyzes the removal of unsubstituted N-terminal amino acids from various peptides. The sequence is that of Probable cytosol aminopeptidase from Glaesserella parasuis serovar 5 (strain SH0165) (Haemophilus parasuis).